We begin with the raw amino-acid sequence, 57 residues long: Kunitz-type serine protease inhibitor homolog delta-dendrotoxin (57 aa).

The region spanning C5–C55 is the BPTI/Kunitz inhibitor domain. Disulfide bonds link C5–C55, C14–C38, and C30–C51.

It belongs to the venom Kunitz-type family. Expressed by the venom gland.

The protein localises to the secreted. Serine protease inhibitor homolog that blocks voltage-gated potassium channels (Kv). The sequence is that of Kunitz-type serine protease inhibitor homolog delta-dendrotoxin from Dendroaspis angusticeps (Eastern green mamba).